Reading from the N-terminus, the 520-residue chain is MAPKKSVSKAGKELEVKKKGGKKEPVVAVEPPLAKEMKEFYHIQIRDLEDRLARYQRKWDELAVQEKMFRQEFEQLANNKKEIVAFLKRTLNQQVDEITDLNEQLQNLQLAKEMEKDAFEAQLAQVRHEFQETKDQLTTENIILGGKLAALEEFRLQKEEVTDKFTLLEEQVRKQENEFRDYAYNLEKKSVLDKDRLRKEIIQRVNLVANEFHKVTTNRMWETTKRAIKENNGITLQMARVSQQGMKLLQENEQLKGRQNNLCKQLELLENTQKVMARHKRGHQKIILMLTKKCQEQQQDTKEAEELRLLLSQLEQRSLQLQVDNQALKSQRDQLSLQLEQQQVDLQRLQQELANEQKVRASLEAALVQATSFLQNILQMHRDEEDSDVDVTFQPWHKEMLQQLLVMLSSTVATRPQKAACPHQESQSHGPPKESRPSIQLPRTGSLLPQLSDITPYQPGDLGLVPRQVHIPPNPQDLRLLSYITRVGTFRAHSSPEMRAPGSLKRLEKFSLPEVPLRPK.

A disordered region spans residues 1–22 (MAPKKSVSKAGKELEVKKKGGK). A compositionally biased stretch (basic and acidic residues) spans 10–22 (AGKELEVKKKGGK). 2 coiled-coil regions span residues 33-189 (LAKE…LEKK) and 236-372 (LQMA…QATS). The interval 416-453 (PQKAACPHQESQSHGPPKESRPSIQLPRTGSLLPQLSD) is disordered. Positions 437–453 (PSIQLPRTGSLLPQLSD) are enriched in polar residues.

This sequence belongs to the CFAP157 family. As to quaternary structure, interacts with TUBB and TUBA4A. Interacts with CEP350.

The protein resides in the cytoplasm. Its subcellular location is the cytoskeleton. It localises to the cilium basal body. Functionally, specifically required during spermatogenesis for flagellum morphogenesis and sperm motility. May be required to suppress the formation of supernumerary axonemes and ensure a correct ultrastructure. This is Cilia- and flagella-associated protein 157 from Homo sapiens (Human).